We begin with the raw amino-acid sequence, 304 residues long: Non-specific ribonucleoside hydrolase RihC (304 aa).

The active site involves H233.

Belongs to the IUNH family. RihC subfamily.

Functionally, hydrolyzes both purine and pyrimidine ribonucleosides with a broad-substrate specificity. This chain is Non-specific ribonucleoside hydrolase RihC, found in Escherichia coli O127:H6 (strain E2348/69 / EPEC).